A 297-amino-acid chain; its full sequence is Protease HtpX homolog (297 aa).

A run of 2 helical transmembrane segments spans residues 14–34 (IFLI…AGYL) and 39–59 (YQFG…SMIF). His-143 is a Zn(2+) binding site. Glu-144 is a catalytic residue. Zn(2+) is bound at residue His-147. A run of 2 helical transmembrane segments spans residues 153-173 (IRIS…ASMG) and 196-216 (IVFL…ASMV). A Zn(2+)-binding site is contributed by Glu-225.

It belongs to the peptidase M48B family. It depends on Zn(2+) as a cofactor.

The protein localises to the cell membrane. This is Protease HtpX homolog from Streptococcus uberis (strain ATCC BAA-854 / 0140J).